A 69-amino-acid polypeptide reads, in one-letter code: Large ribosomal subunit protein uL29 (69 aa).

It belongs to the universal ribosomal protein uL29 family.

This is Large ribosomal subunit protein uL29 from Lachnoclostridium phytofermentans (strain ATCC 700394 / DSM 18823 / ISDg) (Clostridium phytofermentans).